A 148-amino-acid chain; its full sequence is D-aminoacyl-tRNA deacylase (148 aa).

The short motif at 137–138 (GP) is the Gly-cisPro motif, important for rejection of L-amino acids element.

The protein belongs to the DTD family. In terms of assembly, homodimer.

The protein localises to the cytoplasm. The catalysed reaction is glycyl-tRNA(Ala) + H2O = tRNA(Ala) + glycine + H(+). It carries out the reaction a D-aminoacyl-tRNA + H2O = a tRNA + a D-alpha-amino acid + H(+). An aminoacyl-tRNA editing enzyme that deacylates mischarged D-aminoacyl-tRNAs. Also deacylates mischarged glycyl-tRNA(Ala), protecting cells against glycine mischarging by AlaRS. Acts via tRNA-based rather than protein-based catalysis; rejects L-amino acids rather than detecting D-amino acids in the active site. By recycling D-aminoacyl-tRNA to D-amino acids and free tRNA molecules, this enzyme counteracts the toxicity associated with the formation of D-aminoacyl-tRNA entities in vivo and helps enforce protein L-homochirality. The protein is D-aminoacyl-tRNA deacylase of Lacticaseibacillus casei (strain BL23) (Lactobacillus casei).